Reading from the N-terminus, the 736-residue chain is Phosphoribosylformylglycinamidine synthase subunit PurL (736 aa).

The active site involves His48. Tyr51 and Lys90 together coordinate ATP. Glu92 contacts Mg(2+). Substrate contacts are provided by residues 93-96 (SHNH) and Arg115. His94 (proton acceptor) is an active-site residue. Residue Asp116 coordinates Mg(2+). Gln239 serves as a coordination point for substrate. Asp267 is a Mg(2+) binding site. Residue 311–313 (ESQ) coordinates substrate. ATP contacts are provided by Asp492 and Gly529. Asn530 is a binding site for Mg(2+). Ser532 is a substrate binding site.

This sequence belongs to the FGAMS family. In terms of assembly, monomer. Part of the FGAM synthase complex composed of 1 PurL, 1 PurQ and 2 PurS subunits.

Its subcellular location is the cytoplasm. It catalyses the reaction N(2)-formyl-N(1)-(5-phospho-beta-D-ribosyl)glycinamide + L-glutamine + ATP + H2O = 2-formamido-N(1)-(5-O-phospho-beta-D-ribosyl)acetamidine + L-glutamate + ADP + phosphate + H(+). The protein operates within purine metabolism; IMP biosynthesis via de novo pathway; 5-amino-1-(5-phospho-D-ribosyl)imidazole from N(2)-formyl-N(1)-(5-phospho-D-ribosyl)glycinamide: step 1/2. Part of the phosphoribosylformylglycinamidine synthase complex involved in the purines biosynthetic pathway. Catalyzes the ATP-dependent conversion of formylglycinamide ribonucleotide (FGAR) and glutamine to yield formylglycinamidine ribonucleotide (FGAM) and glutamate. The FGAM synthase complex is composed of three subunits. PurQ produces an ammonia molecule by converting glutamine to glutamate. PurL transfers the ammonia molecule to FGAR to form FGAM in an ATP-dependent manner. PurS interacts with PurQ and PurL and is thought to assist in the transfer of the ammonia molecule from PurQ to PurL. The protein is Phosphoribosylformylglycinamidine synthase subunit PurL of Bradyrhizobium diazoefficiens (strain JCM 10833 / BCRC 13528 / IAM 13628 / NBRC 14792 / USDA 110).